Consider the following 279-residue polypeptide: Eukaryotic translation initiation factor 3 subunit J (279 aa).

2 disordered regions span residues 1 to 74 and 229 to 279; these read MSWD…SQKS and ERQA…DDFM. Residues 20-39 are compositionally biased toward acidic residues; the sequence is WEDEDNDDPLLESWDIDEEE. Residues 34–74 adopt a coiled-coil conformation; sequence DIDEEEVARKKKEEEAKKKAEKEALKQKQQEAKNKKLSQKS. The span at 40–67 shows a compositional bias: basic and acidic residues; sequence VARKKKEEEAKKKAEKEALKQKQQEAKN. Residues 268-279 are compositionally biased toward acidic residues; that stretch reads DDFDDFDDDDFM.

It belongs to the eIF-3 subunit J family. Component of the eukaryotic translation initiation factor 3 (eIF-3) complex.

The protein localises to the cytoplasm. Component of the eukaryotic translation initiation factor 3 (eIF-3) complex, which is involved in protein synthesis of a specialized repertoire of mRNAs and, together with other initiation factors, stimulates binding of mRNA and methionyl-tRNAi to the 40S ribosome. The eIF-3 complex specifically targets and initiates translation of a subset of mRNAs involved in cell proliferation. The sequence is that of Eukaryotic translation initiation factor 3 subunit J from Meyerozyma guilliermondii (strain ATCC 6260 / CBS 566 / DSM 6381 / JCM 1539 / NBRC 10279 / NRRL Y-324) (Yeast).